We begin with the raw amino-acid sequence, 430 residues long: Adenylosuccinate synthetase (430 aa).

GTP contacts are provided by residues 12–18 and 40–42; these read GDEGKGK and GHT. The active-site Proton acceptor is the aspartate 13. The Mg(2+) site is built by aspartate 13 and glycine 40. Residues 13–16, 38–41, threonine 128, arginine 142, glutamine 223, threonine 238, and arginine 302 contribute to the IMP site; these read DEGK and NAGH. The active-site Proton donor is histidine 41. 298–304 lines the substrate pocket; that stretch reads TTTGRPR. GTP-binding positions include arginine 304, 330–332, and 412–414; these read SID and SVG.

It belongs to the adenylosuccinate synthetase family. Homodimer. The cofactor is Mg(2+).

It localises to the cytoplasm. The enzyme catalyses IMP + L-aspartate + GTP = N(6)-(1,2-dicarboxyethyl)-AMP + GDP + phosphate + 2 H(+). It functions in the pathway purine metabolism; AMP biosynthesis via de novo pathway; AMP from IMP: step 1/2. Its function is as follows. Plays an important role in the de novo pathway of purine nucleotide biosynthesis. Catalyzes the first committed step in the biosynthesis of AMP from IMP. This is Adenylosuccinate synthetase from Enterococcus faecalis (strain ATCC 700802 / V583).